A 530-amino-acid chain; its full sequence is Equilibrative nucleoside transporter 4 (530 aa).

Residues methionine 1–glycine 21 are disordered. Residues methionine 1 to histidine 68 lie on the Extracellular side of the membrane. A helical transmembrane segment spans residues alanine 69–isoleucine 89. Topologically, residues threonine 90–glycine 101 are cytoplasmic. A helical transmembrane segment spans residues threonine 102–leucine 122. Topologically, residues asparagine 123–glycine 139 are extracellular. A helical membrane pass occupies residues tyrosine 140 to phenylalanine 160. Topologically, residues serine 161 to tyrosine 166 are cytoplasmic. A helical membrane pass occupies residues alanine 167 to phenylalanine 187. Over tyrosine 188–threonine 231 the chain is Extracellular. The chain crosses the membrane as a helical span at residues leucine 232 to valine 252. The Cytoplasmic portion of the chain corresponds to arginine 253–arginine 351. The chain crosses the membrane as a helical span at residues valine 352–proline 372. Over glycine 373 to cysteine 381 the chain is Extracellular. A helical transmembrane segment spans residues isoleucine 382–glycine 402. Residues lysine 403–histidine 416 are Cytoplasmic-facing. A helical membrane pass occupies residues leucine 417–proline 437. Residues serine 438–cysteine 450 lie on the Extracellular side of the membrane. A helical transmembrane segment spans residues isoleucine 451–alanine 471. The Cytoplasmic segment spans residues alanine 472–threonine 486. Residues methionine 487 to threonine 509 traverse the membrane as a helical segment. At arginine 510–leucine 530 the chain is on the extracellular side. N-linked (GlcNAc...) asparagine glycosylation is present at asparagine 523.

The protein belongs to the SLC29A/ENT transporter (TC 2.A.57) family. Post-translationally, N-glycosylated. In terms of tissue distribution, mainly expressed in brain and skeletal muscle. In brain, expressed in cerebellum, cerebral cortex, medulla oblongata, occipital pole, frontal and temporal lobes putamen, spinal cord, substancia nigra, hippocampus, caudate nucleus, nucleus accumbens, pons and choroid plexus. Expressed in heart, in both cardiomyocytes and vascular endothelial cells. Also expressed in adrenal gland, small intestine, pancreas, kidney, liver, bone marrow, lymph node. Located in endometrial stroma, where the expression is high in the proliferative phase, decreases during the secretory phase, and is no longer detectable in the menstrual phase.

The protein localises to the cell membrane. It localises to the apical cell membrane. It catalyses the reaction serotonin(out) = serotonin(in). The enzyme catalyses dopamine(out) = dopamine(in). The catalysed reaction is (R)-noradrenaline(out) = (R)-noradrenaline(in). It carries out the reaction (R)-adrenaline(out) = (R)-adrenaline(in). It catalyses the reaction histamine(out) = histamine(in). The enzyme catalyses tyramine(in) = tyramine(out). The catalysed reaction is guanidine(out) = guanidine(in). It carries out the reaction adenosine(in) = adenosine(out). Its activity is regulated as follows. Activated at acidic pH. In terms of biological role, electrogenic voltage-dependent transporter that mediates the transport of a variety of endogenous bioactive amines, cationic xenobiotics and drugs. Utilizes the physiologic inside-negative membrane potential as a driving force to facilitate cellular uptake of organic cations. Functions as a Na(+)- and Cl(-)-independent bidirectional transporter. Substrate transport is pH-dependent and enhanced under acidic condition, which is most likely the result of allosteric changes in the transporter structure. Implicated in monoamine neurotransmitters uptake such as serotonin, dopamine, adrenaline/epinephrine, noradrenaline/norepinephrine, histamine and tyramine, thereby supporting a role in homeostatic regulation of aminergic neurotransmission in the central nervous system. Also responsible for the uptake of bioactive amines and drugs through the blood-cerebrospinal fluid (CSF) barrier, from the CSF into choroid plexus epithelial cells, thereby playing a significant role in the clearance of cationic neurotoxins, xenobiotics and metabolic waste in the brain. Involved in bidirectional transport of the purine nucleoside adenosine and plays a role in the regulation of extracellular adenosine concentrations in cardiac tissues, in particular during ischemia. May be involved in organic cation uptake from the tubular lumen into renal tubular cells, thereby contributing to organic cation reabsorption in the kidney. Also transports guanidine. This is Equilibrative nucleoside transporter 4 from Homo sapiens (Human).